The primary structure comprises 166 residues: Nucleotide-binding protein SUN_0226 (166 aa).

It belongs to the YajQ family.

Nucleotide-binding protein. This Sulfurovum sp. (strain NBC37-1) protein is Nucleotide-binding protein SUN_0226.